The primary structure comprises 113 residues: U11-theraphotoxin-Hhn1a (113 aa).

The signal sequence occupies residues 1-21 (MNTVRVAFLLVFVLAVSLGQA). The propeptide occupies 22–74 (DKDENRMEMQEKTEQGKSYLDFAENLLLQKLEELEAKLLEEDSEESRNSRQKR). The disordered stretch occupies residues 61 to 83 (EEDSEESRNSRQKRCIGEGVPCD). Cystine bridges form between Cys-75–Cys-90, Cys-82–Cys-95, and Cys-89–Cys-110.

This sequence belongs to the neurotoxin 14 (magi-1) family. 01 (HNTX-16) subfamily. As to expression, expressed by the venom gland.

The protein localises to the secreted. Its function is as follows. Probable ion channel inhibitor. In Cyriopagopus hainanus (Chinese bird spider), this protein is U11-theraphotoxin-Hhn1a.